The following is a 177-amino-acid chain: Alkyl hydroperoxide reductase AhpD (177 aa).

Cys-131 (proton donor) is an active-site residue. An intrachain disulfide couples Cys-131 to Cys-134. Cys-134 (cysteine sulfenic acid (-SOH) intermediate) is an active-site residue.

Belongs to the AhpD family.

It catalyses the reaction N(6)-[(R)-dihydrolipoyl]-L-lysyl-[lipoyl-carrier protein] + a hydroperoxide = N(6)-[(R)-lipoyl]-L-lysyl-[lipoyl-carrier protein] + an alcohol + H2O. Antioxidant protein with alkyl hydroperoxidase activity. Required for the reduction of the AhpC active site cysteine residues and for the regeneration of the AhpC enzyme activity. The chain is Alkyl hydroperoxide reductase AhpD from Solibacter usitatus (strain Ellin6076).